Reading from the N-terminus, the 138-residue chain is Large ribosomal subunit protein bL17 (138 aa).

The tract at residues Arg118–Ala138 is disordered.

It belongs to the bacterial ribosomal protein bL17 family. As to quaternary structure, part of the 50S ribosomal subunit. Contacts protein L32.

In Rhodopseudomonas palustris (strain HaA2), this protein is Large ribosomal subunit protein bL17.